Consider the following 210-residue polypeptide: Thiamine-phosphate synthase (210 aa).

4-amino-2-methyl-5-(diphosphooxymethyl)pyrimidine contacts are provided by residues 39-43 and asparagine 71; that span reads QLREK. Positions 72 and 91 each coordinate Mg(2+). Residue serine 110 coordinates 4-amino-2-methyl-5-(diphosphooxymethyl)pyrimidine. 134-136 is a 2-[(2R,5Z)-2-carboxy-4-methylthiazol-5(2H)-ylidene]ethyl phosphate binding site; sequence TPT. Lysine 137 provides a ligand contact to 4-amino-2-methyl-5-(diphosphooxymethyl)pyrimidine. Glycine 163 lines the 2-[(2R,5Z)-2-carboxy-4-methylthiazol-5(2H)-ylidene]ethyl phosphate pocket.

Belongs to the thiamine-phosphate synthase family. Mg(2+) serves as cofactor.

It carries out the reaction 2-[(2R,5Z)-2-carboxy-4-methylthiazol-5(2H)-ylidene]ethyl phosphate + 4-amino-2-methyl-5-(diphosphooxymethyl)pyrimidine + 2 H(+) = thiamine phosphate + CO2 + diphosphate. It catalyses the reaction 2-(2-carboxy-4-methylthiazol-5-yl)ethyl phosphate + 4-amino-2-methyl-5-(diphosphooxymethyl)pyrimidine + 2 H(+) = thiamine phosphate + CO2 + diphosphate. The catalysed reaction is 4-methyl-5-(2-phosphooxyethyl)-thiazole + 4-amino-2-methyl-5-(diphosphooxymethyl)pyrimidine + H(+) = thiamine phosphate + diphosphate. It participates in cofactor biosynthesis; thiamine diphosphate biosynthesis; thiamine phosphate from 4-amino-2-methyl-5-diphosphomethylpyrimidine and 4-methyl-5-(2-phosphoethyl)-thiazole: step 1/1. In terms of biological role, condenses 4-methyl-5-(beta-hydroxyethyl)thiazole monophosphate (THZ-P) and 2-methyl-4-amino-5-hydroxymethyl pyrimidine pyrophosphate (HMP-PP) to form thiamine monophosphate (TMP). This Campylobacter jejuni (strain RM1221) protein is Thiamine-phosphate synthase.